A 300-amino-acid chain; its full sequence is Ribosomal protein L11 methyltransferase (300 aa).

S-adenosyl-L-methionine is bound by residues Thr-147, Gly-168, Asp-190, and Asn-236.

This sequence belongs to the methyltransferase superfamily. PrmA family.

The protein localises to the cytoplasm. The enzyme catalyses L-lysyl-[protein] + 3 S-adenosyl-L-methionine = N(6),N(6),N(6)-trimethyl-L-lysyl-[protein] + 3 S-adenosyl-L-homocysteine + 3 H(+). In terms of biological role, methylates ribosomal protein L11. This Leptospira borgpetersenii serovar Hardjo-bovis (strain JB197) protein is Ribosomal protein L11 methyltransferase.